A 340-amino-acid chain; its full sequence is uncharacterized protein (340 aa).

The next 2 helical transmembrane spans lie at 162–182 (PLVP…VLAG) and 239–259 (FWIS…IVVP).

The protein resides in the cell membrane. This is an uncharacterized protein from Mycobacterium bovis (strain ATCC BAA-935 / AF2122/97).